The primary structure comprises 151 residues: Flavodoxin YqcA (151 aa).

In terms of domain architecture, Flavodoxin-like spans 4 to 145; sequence IGIFVGTVYG…ISCPWVEAWA (142 aa). Residues 10–15 and 99–101 each bind FMN; these read TVYGNA and NFC.

It belongs to the flavodoxin family. MioC subfamily. Monomer. FMN is required as a cofactor.

Functionally, probable electron transporter. This chain is Flavodoxin YqcA, found in Pectobacterium carotovorum subsp. carotovorum (Erwinia carotovora subsp. carotovora).